The sequence spans 760 residues: MVNAGAMSGSGNLMDFLDEPFPDVGTYEDFHTIDWLREKSRDTDRHRKITSKSKESIWEFIKSLLDAWSGWVVMLLIGLLAGTLAGVIDLAVDWMTDLKEGVCLSAFWYSHEQCCWTSNETTFEDRDKCPLWQKWSELLVNQSEGASAYILNYLMYILWALLFAFLAVSLVRVFAPYACGSGIPEIKTILSGFIIRGYLGKWTLLIKTVTLVLVVSSGLSLGKEGPLVHVACCCGNFFSSLFSKYSKNEGKRREVLSAAAAAGVSVAFGAPIGGVLFSLEEVSYYFPLKTLWRSFFAALVAAFTLRSINPFGNSRLVLFYVEYHTPWYMAELFPFILLGVFGGLWGTLFIRCNIAWCRRRKTTRLGKYPVLEVIVVTAITAIIAYPNPYTRQSTSELISELFNDCGALESSQLCDYINDPNMTRPVDDIPDRPAGVGVYTAMWQLALALIFKIVVTIFTFGMKIPSGLFIPSMAVGAIAGRMVGIGVEQLAYHHHDWIIFRNWCRPGADCVTPGLYAMVGAAACLGGVTRMTVSLVVIMFELTGGLEYIVPLMAAAVTSKWVADAFGKEGIYEAHIHLNGYPFLDVKDEFTHRTLATDVMRPRRGEPPLSVLTQDSMTVEDVETLIKETDYNGFPVVVSRDSERLIGFAQRRELILAIKNARQRQEGIVSNSIMYFTEEPPELPANSPHPLKLRRILNLSPFTVTDHTPMETVVDIFRKLGLRQCLVTRSGRLLGIITKKDVLRHMAQMANQDPESIMFN.

The Cytoplasmic segment spans residues 1–67 (MVNAGAMSGS…WEFIKSLLDA (67 aa)). The required for localization in the endoplasmic reticulum stretch occupies residues 14-63 (MDFLDEPFPDVGTYEDFHTIDWLREKSRDTDRHRKITSKSKESIWEFIKS). A run of 2 helical transmembrane segments spans residues 68 to 105 (WSGW…VCLS) and 151 to 174 (LNYL…VRVF). The Selectivity filter part_1 signature appears at 180–184 (GSGIP). A chloride-binding site is contributed by Ser-181. Residues 183–190 (IPEIKTIL) constitute an intramembrane region (helical). The next 2 membrane-spanning stretches (helical) occupy residues 200–218 (GKWT…VSSG) and 224–243 (EGPL…SLFS). Positions 222-226 (GKEGP) match the Selectivity filter part_2 motif. 2 consecutive intramembrane regions (helical) follow at residues 255–267 (VLSA…VSVA) and 271–279 (PIGGVLFSL). 5 helical membrane passes run 291–309 (LWRS…RSIN), 333–358 (FPFI…AWCR), 365–385 (LGKY…IIAY), 442–462 (MWQL…TFGM), and 467–486 (GLFI…VGIG). A Selectivity filter part_3 motif is present at residues 467 to 471 (GLFIP). Chloride is bound at residue Phe-469. 2 intramembrane regions (helical) span residues 514–528 (GLYA…LGGV) and 532–543 (TVSLVVIMFELT). Positions 544 to 547 (GGLE) form an intramembrane region, note=Loop between two helices. The helical transmembrane segment at 548-566 (YIVPLMAAAVTSKWVADAF) threads the bilayer. The Cytoplasmic segment spans residues 567–760 (GKEGIYEAHI…NQDPESIMFN (194 aa)). Tyr-572 is a chloride binding site. The CBS 1 domain maps to 600–666 (MRPRRGEPPL…AIKNARQRQE (67 aa)). ATP contacts are provided by residues Ser-610 and 631–633 (YNG). The required for localization in the endoplasmic reticulum stretch occupies residues 667 to 696 (GIVSNSIMYFTEEPPELPANSPHPLKLRRI). Positions 697 to 755 (LNLSPFTVTDHTPMETVVDIFRKLGLRQCLVTRSGRLLGIITKKDVLRHMAQMANQDPE) constitute a CBS 2 domain. Residue 738 to 741 (TKKD) coordinates ATP.

This sequence belongs to the chloride channel (TC 2.A.49) family. ClC-4/CLCN4 subfamily. Monomer. Forms heterodimers with CLCN3. In terms of tissue distribution, abundant in skeletal muscle and also detectable in brain and heart.

Its subcellular location is the early endosome membrane. It is found in the late endosome membrane. It localises to the endoplasmic reticulum membrane. The protein resides in the lysosome membrane. The protein localises to the recycling endosome membrane. Functionally, strongly outwardly rectifying, electrogenic H(+)/Cl(-)exchanger which mediates the exchange of chloride ions against protons. The CLC channel family contains both chloride channels and proton-coupled anion transporters that exchange chloride or another anion for protons. The presence of conserved gating glutamate residues is typical for family members that function as antiporters. In Homo sapiens (Human), this protein is H(+)/Cl(-) exchange transporter 4 (CLCN4).